The following is a 278-amino-acid chain: Methyltransferase GfsG (278 aa).

S-adenosyl-L-methionine contacts are provided by residues Gln-105 and Asp-128 to Ala-129. Glu-146 functions as the Proton acceptor in the catalytic mechanism. Position 150 (His-150) interacts with S-adenosyl-L-methionine.

Belongs to the methyltransferase superfamily.

The protein operates within antibiotic biosynthesis. Functionally, methylase required for synthesis of the 16-membered macrolide antibiotics FD-891 and FD-892. In vitro uses S-adenosyl-L-methionine to methylate a number of biosynthetic intermediates in the synthesis of FD-891. This is Methyltransferase GfsG from Streptomyces halstedii.